Here is a 521-residue protein sequence, read N- to C-terminus: Phospholipase C B (521 aa).

The tat-type signal signal peptide spans 1-39 (MGSEHPVDGMTRRQFFAKAAAATTAGAFMSLAGPIIEKA). Residues 501–521 (FPQSMPTQETAPTRGIPSGLC) are disordered.

It belongs to the bacterial phospholipase C family. Post-translationally, predicted to be exported by the Tat system. The position of the signal peptide cleavage has not been experimentally proven.

It localises to the secreted. Its subcellular location is the cell wall. The catalysed reaction is a 1,2-diacyl-sn-glycero-3-phosphocholine + H2O = phosphocholine + a 1,2-diacyl-sn-glycerol + H(+). Functionally, involved in virulence. Induces cytotoxic effects on mouse macrophage cell lines, via direct or indirect enzymatic hydrolysis of cell membrane phospholipids. Hydrolyzes phosphatidylcholine. This chain is Phospholipase C B, found in Mycobacterium tuberculosis (strain CDC 1551 / Oshkosh).